The primary structure comprises 84 residues: MAHKKGQGSTQNNRDSAGRRLGVKKFGGEKVIPGNIIIRQRGTKVHPGNGVGMGKDHTIFAMVEGVVKFENRSRSQKRVSVVPA.

The interval 1–25 (MAHKKGQGSTQNNRDSAGRRLGVKK) is disordered.

The protein belongs to the bacterial ribosomal protein bL27 family.

This is Large ribosomal subunit protein bL27 from Sulfurovum sp. (strain NBC37-1).